A 704-amino-acid chain; its full sequence is Neutral ceramidase (704 aa).

The N-terminal stretch at 1–23 (MANSKMAFLAFLAVSFLCGLVSA) is a signal peptide. An N-linked (GlcNAc...) asparagine glycan is attached at asparagine 230. The active-site Nucleophile is serine 276. Asparagine 362, asparagine 550, and asparagine 598 each carry an N-linked (GlcNAc...) asparagine glycan.

The protein belongs to the neutral ceramidase family. In terms of processing, N-glycosylated. Widely expressed in different tissues but enriched in neurons at all stages of development.

It is found in the secreted. The enzyme catalyses an N-acylsphing-4-enine + H2O = sphing-4-enine + a fatty acid. In terms of biological role, hydrolyzes the sphingolipid ceramide into sphingosine and free fatty acid at an optimal pH of 6.5-7.5. Acts as a key regulator of sphingolipid signaling metabolites by generating sphingosine at the cell surface. Regulates synaptic vesicle exocytosis and trafficking by controlling presynaptic terminal sphingolipid composition. This Drosophila melanogaster (Fruit fly) protein is Neutral ceramidase (CDase).